We begin with the raw amino-acid sequence, 533 residues long: Inositol-3-phosphate synthase (533 aa).

Thr48 is subject to Phosphothreonine. 5 residues coordinate NAD(+): Gly74, Gly75, Asn76, Asn77, and Asp148. Phosphoserine is present on residues Ser177 and Ser184. Residues Ser184, Ile185, Gln195, Asp196, Arg198, Thr244, Ala245, Asn246, Thr247, Gly295, Ser296, Asp320, Leu321, Ser323, Asn354, Asn355, and Asp356 each coordinate NAD(+). At Ser296 the chain carries Phosphoserine. A Phosphoserine modification is found at Ser368. Lys369 serves as a coordination point for NAD(+). Position 374 is a phosphoserine (Ser374). NAD(+) contacts are provided by Gly409, Asp410, Asp438, and Ser439.

It belongs to the myo-inositol 1-phosphate synthase family. In terms of assembly, homotetramer. The cofactor is NAD(+). Phosphorylation at Ser-184 and Ser-374 is associated with a decrease in activity. Increasingly phosphorylated in presence of valproate.

The protein resides in the cytoplasm. It carries out the reaction D-glucose 6-phosphate = 1D-myo-inositol 3-phosphate. It participates in polyol metabolism; myo-inositol biosynthesis; myo-inositol from D-glucose 6-phosphate: step 1/2. With respect to regulation, competitively inhibited by myo-2-inosose 1-phosphate, which is also an intermediate in the catalytic reaction. Competitively inhibited by 2-deoxy-myo-inositol 1-phosphate (dMIP), 1-deoxy-1-(phosphonomethyl)-myo-2-inosose (DPMI), dihydroxyacetone phosphate (DHAP), 6-deoxy-D-glucose 6-(E)-vinylhomophosphonate, 6-deoxy-D-glucitol 6-(E)-vinylhomophosphonate, 2,6-dideoxy-D-glucose 6-(E)-vinylhomophosphonate and 2,6-dideoxy-D-glucitol 6-(E)-vinylhomophosphonate. Inhibited by 2-deoxyglucitol 6-phosphate (dgtolP). Key enzyme in myo-inositol biosynthesis pathway that catalyzes the conversion of glucose 6-phosphate to 1-myo-inositol 1-phosphate in a NAD-dependent manner. Rate-limiting enzyme in the synthesis of all inositol-containing compounds. This is Inositol-3-phosphate synthase (INO1) from Saccharomyces cerevisiae (strain ATCC 204508 / S288c) (Baker's yeast).